An 88-amino-acid polypeptide reads, in one-letter code: MRAAFWVGCAALLLSACSSEPVQQATAAHVAPGLKASMSSSGEANCAMIGGSLSVARQLDGTAIGMCALPNGKRCSEQSLAAGSCGSY.

The first 25 residues, 1-25, serve as a signal peptide directing secretion; it reads MRAAFWVGCAALLLSACSSEPVQQA.

This is an uncharacterized protein from Escherichia coli O6:H1 (strain CFT073 / ATCC 700928 / UPEC).